The primary structure comprises 2110 residues: MKGHQFKSWIFELREILREIKNSHYFLDSRTQFNSVGSFSHIFFHQERFIKLFDPRIWSILLSRNSQGSTSNRYFTIKGVILFVVAVLIYRINSRNMVERKNLYLIGLLPIPMNSIGPRNDTLEESVGSSNINRLIVSLLYLPKGKKISESCFLNPKESTWVLPITKKCSMPESNWGSRWWRNWIGKKRDSSQLKGSSDQSRDPLDSISNEDSEYHTLINQREIQQLKERSILWDPSFLQTERTEIESDRFPKCLSVYSSMSRLFTEREKQMINHLLPEEIEEFLGNPTRSVRSFFSDRWSELHLGSNPTERSTRDQKLLKKQQDLSFVPSRRSEKKEMVNIFKIITYLQNTVSIHPISSYPGCDMVPKDEPDMDSSNKISFLNKNPFFDLFHLFHDRNRGGYTLHHDFESEERFQEMADLFTLSITEPDLVYHKGFAFSIDSYGLDQKQFLNEVFDSRDESKKKYLLALPPFFYEENESFYRRIRKKWVRISCGNDLEDPKPKIVVFASNNIMEAVNQYRLIRNLIQIQYSTYGYIRNVLNRFFLMNRSDRNFEYGIQRDQIGKDTLNHRTIMKYTINQHFSNLKKSQKRWFDPLILISRTERSMNRDPDAYRYKWSNGSKNFQEHLEHFVSEQKSRFQVVFDRLRINQYSIDWSEVIDKKGLSKPFRFFLSKLLFFLSNSLPFFFVSFGNIPIHRSEIYIYELKGPNDQLCNQLLESIGLQIVHLKKWKPFLLDLLDDHDTSQKSKFLINGGTISPFLFNKIPKWMIDSFHTRNNRRKSFDNTDSYFSTIFHDQDNWLNPVKPFHRSSLISSFYKANRLRFLNNPHHFCFYCNKRFPFYVEKARINNSDFTYGQFLNILFIHNKIFSLCVGKKKHAFWGRDTISPIESQVSNIFIPNDFPQSGGDETYNLYKSFHFPSRSDPFVRRAIYSIADISGTPLTEGQIVNFERTYCQPLSDMNLSDSEGKNSHQYLNFNSNMGLIHTPCSEKYLPSEKRKKRSLCLKKCVEKGQMYRTFQRDSAFSTLSKWNLFQTYMPWFLTSTGYKYLNFIFLDTFSDLLPILSLSSSQKFVSIFHDIMHGSDISWRILQKKLCLLQWKWNLISEISSKCFHNLLLSEERIHRNNESPLISTHLRSPNVREFLYSILFLLLVAGYLVCTHLLFVSWASSELQTEFEKVKSLMIPSSMIELRKLLDRYPTSEPNSFWLKNLFLVALEQLGDSLEEIRGSASGGNMLLGGDPAYGVKSIRSKKKYLNINLIDIIDLISIIPNPINRITFSRNTRHLSHTSKEIYSLIRKRKNVNGDWIDDKIESWVANSDSIDDEEREFLVQFSTLTTEKRIDQILLSLTHSDHLSKNDSGYQMIEQPGAIYLRYLVDIHKKYLMNYEFNTSCLAERRIFLAHYQTITYSQTSCGANSLNFPSHGKPFSLRLALSPSRGILVIGSIGTGRSYLVKYLATNSYVPFITVFLNKFLDNKPKGFLIDDIDIDASDDIDASDDIDASDDIDASDDIDRDLHTELELLTMDMMPEIDRFYITLQFELAKAMSPCIIWIPNIHDLDVNESNYFSLGLLVNHLSRDCERCSTRNILVIASTHIPQKVDPALIAPNKLNTCIKIRRLLIPQQRKHFFTLSYTRGFRLENKMFHTNGFGSITMGSNARDLVALTNEALSISITQKKSIIDTNTIRSALHRQTWDLRSQVRSVQDHGILFYQIGRAVAQNVLLSNCPIDPISIYMKKKSCNEGDSYLYKWYFELGTSMKKLTILLYLLSCSAGSVAQDLWSLPRPDEKNGITSYGLVENDSDLVHGLLEVEGALVGSSRTEKDCSQFDNDRVTLLLRPEPRNPLDMMQNGSCSILDQRFLYEKNESEFEEGEGEGALDPQQIEEDLFNHIVWAPRIWRPWGFLFDCIERPNELGFPYWSRSFRGKRILYDEEDELQENDSEFLQSGTMQYQTRDRSSKEQGLFRISQFIWDPADPLFFLFKDQPFVSVFSHRELFADEEMSKGLLTSPTDPPTSIYKRWFIKKTQEKHFELLINRQRWFRTNSSLSNGSFRSNTLSESYQYLSNLFLSNGTLLDQMTKTLLRKRWLFPDEMKIGFMEQEKDFPFLSRKDMWP.

The disordered stretch occupies residues 190-209 (DSSQLKGSSDQSRDPLDSIS). 1442–1449 (GSIGTGRS) is a binding site for ATP.

The protein belongs to the Ycf2 family.

It is found in the plastid. Its subcellular location is the chloroplast stroma. Probable ATPase of unknown function. Its presence in a non-photosynthetic plant (Epifagus virginiana) and experiments in tobacco indicate that it has an essential function which is probably not related to photosynthesis. This chain is Protein Ycf2, found in Panax ginseng (Korean ginseng).